The sequence spans 466 residues: Fumarate hydratase class II (466 aa).

Substrate is bound by residues 100–102, R128, 131–134, 141–143, and T189; these read SGT, HPND, and SSN. Basic and acidic residues predominate over residues 122 to 137; that stretch reads GERGERRKVHPNDDVN. The disordered stretch occupies residues 122 to 143; that stretch reads GERGERRKVHPNDDVNKGQSSN. H190 serves as the catalytic Proton donor/acceptor. The active site involves S320. Substrate contacts are provided by residues S321 and 326–328; that span reads KVN.

Belongs to the class-II fumarase/aspartase family. Fumarase subfamily. Homotetramer.

Its subcellular location is the cytoplasm. It carries out the reaction (S)-malate = fumarate + H2O. The protein operates within carbohydrate metabolism; tricarboxylic acid cycle; (S)-malate from fumarate: step 1/1. In terms of biological role, involved in the TCA cycle. Catalyzes the stereospecific interconversion of fumarate to L-malate. This chain is Fumarate hydratase class II, found in Myxococcus xanthus (strain DK1622).